Consider the following 510-residue polypeptide: Bifunctional purine biosynthesis protein PurH (510 aa).

The MGS-like domain occupies 1-142 (MRALLSVSDK…KNFKDVLIVT (142 aa)).

This sequence belongs to the PurH family.

It catalyses the reaction (6R)-10-formyltetrahydrofolate + 5-amino-1-(5-phospho-beta-D-ribosyl)imidazole-4-carboxamide = 5-formamido-1-(5-phospho-D-ribosyl)imidazole-4-carboxamide + (6S)-5,6,7,8-tetrahydrofolate. The enzyme catalyses IMP + H2O = 5-formamido-1-(5-phospho-D-ribosyl)imidazole-4-carboxamide. It participates in purine metabolism; IMP biosynthesis via de novo pathway; 5-formamido-1-(5-phospho-D-ribosyl)imidazole-4-carboxamide from 5-amino-1-(5-phospho-D-ribosyl)imidazole-4-carboxamide (10-formyl THF route): step 1/1. Its pathway is purine metabolism; IMP biosynthesis via de novo pathway; IMP from 5-formamido-1-(5-phospho-D-ribosyl)imidazole-4-carboxamide: step 1/1. This chain is Bifunctional purine biosynthesis protein PurH, found in Campylobacter concisus (strain 13826).